The sequence spans 151 residues: Deoxyuridine 5'-triphosphate nucleotidohydrolase (151 aa).

Residues 70–72 (RSG), N83, 87–89 (LID), and M97 each bind substrate.

This sequence belongs to the dUTPase family. Requires Mg(2+) as cofactor.

The catalysed reaction is dUTP + H2O = dUMP + diphosphate + H(+). It participates in pyrimidine metabolism; dUMP biosynthesis; dUMP from dCTP (dUTP route): step 2/2. Functionally, this enzyme is involved in nucleotide metabolism: it produces dUMP, the immediate precursor of thymidine nucleotides and it decreases the intracellular concentration of dUTP so that uracil cannot be incorporated into DNA. This chain is Deoxyuridine 5'-triphosphate nucleotidohydrolase, found in Pasteurella multocida (strain Pm70).